An 82-amino-acid polypeptide reads, in one-letter code: MTFPRAFTIIDDHGMVVSVFFWLLLIIILILFSIALLNVIKLCMVCCNLGKTIIVLPARHAYDAYKTFMQTKAYNPDEAFLV.

Over 1–19 (MTFPRAFTIIDDHGMVVSV) the chain is Virion surface. The chain crosses the membrane as a helical span at residues 20–40 (FFWLLLIIILILFSIALLNVI). The Intravirion portion of the chain corresponds to 41–82 (KLCMVCCNLGKTIIVLPARHAYDAYKTFMQTKAYNPDEAFLV).

This sequence belongs to the alphacoronaviruses E protein family. In terms of assembly, homopentamer. Interacts with membrane protein M in the budding compartment of the host cell, which is located between endoplasmic reticulum and the Golgi complex. Interacts with Nucleoprotein.

The protein localises to the host Golgi apparatus membrane. Functionally, plays a central role in virus morphogenesis and assembly. Acts as a viroporin and self-assembles in host membranes forming pentameric protein-lipid pores that allow ion transport. Also plays a role in the induction of apoptosis. In Feline coronavirus (strain FIPV WSU-79/1146) (FCoV), this protein is Envelope small membrane protein.